A 464-amino-acid polypeptide reads, in one-letter code: tRNA-2-methylthio-N(6)-dimethylallyladenosine synthase (464 aa).

The region spanning 19 to 135 (GSYWITTFGC…LENLLERVDS (117 aa)) is the MTTase N-terminal domain. Residues Cys28, Cys64, Cys98, Cys170, Cys174, and Cys177 each contribute to the [4Fe-4S] cluster site. The region spanning 156–393 (RDSTICGWVN…NELVEATSRK (238 aa)) is the Radical SAM core domain. A TRAM domain is found at 396–464 (QRYLNNTESV…SFSLSGQIYK (69 aa)).

The protein belongs to the methylthiotransferase family. MiaB subfamily. In terms of assembly, monomer. The cofactor is [4Fe-4S] cluster.

The protein resides in the cytoplasm. It catalyses the reaction N(6)-dimethylallyladenosine(37) in tRNA + (sulfur carrier)-SH + AH2 + 2 S-adenosyl-L-methionine = 2-methylsulfanyl-N(6)-dimethylallyladenosine(37) in tRNA + (sulfur carrier)-H + 5'-deoxyadenosine + L-methionine + A + S-adenosyl-L-homocysteine + 2 H(+). Functionally, catalyzes the methylthiolation of N6-(dimethylallyl)adenosine (i(6)A), leading to the formation of 2-methylthio-N6-(dimethylallyl)adenosine (ms(2)i(6)A) at position 37 in tRNAs that read codons beginning with uridine. The protein is tRNA-2-methylthio-N(6)-dimethylallyladenosine synthase of Prochlorococcus marinus (strain MIT 9515).